We begin with the raw amino-acid sequence, 90 residues long: UPF0223 protein lmo1058 (90 aa).

This sequence belongs to the UPF0223 family.

The chain is UPF0223 protein lmo1058 from Listeria monocytogenes serovar 1/2a (strain ATCC BAA-679 / EGD-e).